The chain runs to 93 residues: Pyrimidine/purine nucleoside phosphorylase (93 aa).

This sequence belongs to the nucleoside phosphorylase PpnP family.

It carries out the reaction a purine D-ribonucleoside + phosphate = a purine nucleobase + alpha-D-ribose 1-phosphate. The catalysed reaction is adenosine + phosphate = alpha-D-ribose 1-phosphate + adenine. The enzyme catalyses cytidine + phosphate = cytosine + alpha-D-ribose 1-phosphate. It catalyses the reaction guanosine + phosphate = alpha-D-ribose 1-phosphate + guanine. It carries out the reaction inosine + phosphate = alpha-D-ribose 1-phosphate + hypoxanthine. The catalysed reaction is thymidine + phosphate = 2-deoxy-alpha-D-ribose 1-phosphate + thymine. The enzyme catalyses uridine + phosphate = alpha-D-ribose 1-phosphate + uracil. It catalyses the reaction xanthosine + phosphate = alpha-D-ribose 1-phosphate + xanthine. In terms of biological role, catalyzes the phosphorolysis of diverse nucleosides, yielding D-ribose 1-phosphate and the respective free bases. Can use uridine, adenosine, guanosine, cytidine, thymidine, inosine and xanthosine as substrates. Also catalyzes the reverse reactions. This is Pyrimidine/purine nucleoside phosphorylase from Pseudomonas savastanoi pv. phaseolicola (strain 1448A / Race 6) (Pseudomonas syringae pv. phaseolicola (strain 1448A / Race 6)).